A 310-amino-acid polypeptide reads, in one-letter code: Thiamine-monophosphate kinase (310 aa).

Mg(2+)-binding residues include aspartate 26, threonine 40, serine 41, and aspartate 42. Aspartate 49 provides a ligand contact to substrate. Residues aspartate 70 and aspartate 118 each contribute to the Mg(2+) site. ATP contacts are provided by residues 117–118 (GD) and arginine 141. Residue aspartate 202 participates in Mg(2+) binding. Serine 204 lines the ATP pocket. Residue aspartate 205 coordinates Mg(2+). Substrate is bound by residues glutamate 251 and tryptophan 299.

The protein belongs to the thiamine-monophosphate kinase family.

The enzyme catalyses thiamine phosphate + ATP = thiamine diphosphate + ADP. Its pathway is cofactor biosynthesis; thiamine diphosphate biosynthesis; thiamine diphosphate from thiamine phosphate: step 1/1. In terms of biological role, catalyzes the ATP-dependent phosphorylation of thiamine-monophosphate (TMP) to form thiamine-pyrophosphate (TPP), the active form of vitamin B1. The protein is Thiamine-monophosphate kinase of Pyrococcus abyssi (strain GE5 / Orsay).